The sequence spans 785 residues: MTAAKDRILELRAELDQHNYRYHVLDEPSIPDAEYDRLFHELKALEAANPELITSDSPTQRVGSVALTAFTQVRHEVPMLSLGNAFEETDMREFDRRVTEGLDLPAGDLFGGGAAVEYSCEPKLDGLAVSLLYQDGVLVRGATRGDGTTGEDISVNVRTVRNIPLKLHGTGWPATLEVRGEVFMSKAGFERLNASQLEVGGKTFANPRNAAAGSLRQLDSKITANRPLEFCCYGIGQVSHDISDTHIGNLQQLKAWGMPISHELKLAKGIGECLDYYRDIGERRNSLAYEIDGVVFKVNSIADQRELGFRAREPRWAIAHKFPAMEELTELLDVEFQVGRTGAVTPVARLKPVKVAGVTVANATLHNMDEVARLGLMIGDTVIIRRAGDVIPQVVQVVMERRPEDARPVQIPESCPVCGSHVERTQLVKRSKGKETISEGAVYRCVGRLACGAQLKQAIIHFVSRRAMDIEGLGDKSVEQLVDEGLVSSPADLYALKFEDIVDLEGFAEVSSNKLLAAIEDSKKPGLARFIYALGIPDVGEETAKVLARSLGSLERVQQALPQVLTYLPDIGLEVAHEIHSFFEDAHNRQVITELLGHGLQIQDQGELGAEFAASTTLGGFLDKLHIPSVGPGGAQKLADKFESLEGVMNADWLDMRQALPEKQANSVREFFALPEHRQLAEDAEKQLRDFGMHWQSEKKVVEGLPLAGETWVLTGKVELMSRDVAKEHLESLGAKVAGSVSAKTHCVVAGPGAGSKLTKANELGVKVMDEEAFIAFLKGHGISA.

Residues 32-36 (DAEYD), 81-82 (SL), and E121 each bind NAD(+). K123 functions as the N6-AMP-lysine intermediate in the catalytic mechanism. R144, E181, K297, and K321 together coordinate NAD(+). 4 residues coordinate Zn(2+): C415, C418, C445, and C451. The 84-residue stretch at 702-785 (VEGLPLAGET…AFLKGHGISA (84 aa)) folds into the BRCT domain.

The protein belongs to the NAD-dependent DNA ligase family. LigA subfamily. Mg(2+) is required as a cofactor. Mn(2+) serves as cofactor.

It carries out the reaction NAD(+) + (deoxyribonucleotide)n-3'-hydroxyl + 5'-phospho-(deoxyribonucleotide)m = (deoxyribonucleotide)n+m + AMP + beta-nicotinamide D-nucleotide.. Its function is as follows. DNA ligase that catalyzes the formation of phosphodiester linkages between 5'-phosphoryl and 3'-hydroxyl groups in double-stranded DNA using NAD as a coenzyme and as the energy source for the reaction. It is essential for DNA replication and repair of damaged DNA. In Pseudomonas fluorescens (strain Pf0-1), this protein is DNA ligase.